Here is a 711-residue protein sequence, read N- to C-terminus: Putative membrane protein IgaA homolog (711 aa).

Residue Met1 is a topological domain, periplasmic. A helical membrane pass occupies residues 2 to 22; the sequence is STIVIFLAALLACSLLAGWLI. Over 23–204 the chain is Cytoplasmic; the sequence is KVRSRRRQLP…YALSRPRGLR (182 aa). The next 2 helical transmembrane spans lie at 205–225 and 226–246; these read EALLIVASFLMFFFCLITPDV and FVPWLAGGALLLLGAGLWGLF. Over 247-339 the chain is Cytoplasmic; the sequence is APPAKSSLRE…KNFPLQHWLR (93 aa). Residues 340–360 traverse the membrane as a helical segment; sequence STIIAAGSLLVLFMLLFWIPL. At 361-655 the chain is on the periplasmic side; the sequence is DMPLKFTLSW…IPDRSGLWRY (295 aa). Residues 656–676 traverse the membrane as a helical segment; the sequence is LSTTLLLLTMLGSAIYNGVQA. Residues 677 to 711 are Cytoplasmic-facing; it reads WRRYQRHRTRMMEIQAYYESCLNPQLITPSESLIE.

Belongs to the IgaA family.

It is found in the cell inner membrane. The chain is Putative membrane protein IgaA homolog (yrfF) from Escherichia coli (strain K12).